A 326-amino-acid polypeptide reads, in one-letter code: uncharacterized protein (326 aa).

The protein belongs to the transferase hexapeptide repeat family.

This is an uncharacterized protein from Escherichia coli (strain K12).